We begin with the raw amino-acid sequence, 412 residues long: Multifunctional CCA protein (412 aa).

ATP is bound by residues G8 and R11. The CTP site is built by G8 and R11. D21 and D23 together coordinate Mg(2+). The ATP site is built by R91, R137, and R140. Residues R91, R137, and R140 each coordinate CTP. Positions 228-329 (TGIHTLMTLS…VKLFDSIDAW (102 aa)) constitute an HD domain.

Belongs to the tRNA nucleotidyltransferase/poly(A) polymerase family. Bacterial CCA-adding enzyme type 1 subfamily. Monomer. Can also form homodimers and oligomers. Mg(2+) is required as a cofactor. It depends on Ni(2+) as a cofactor.

It catalyses the reaction a tRNA precursor + 2 CTP + ATP = a tRNA with a 3' CCA end + 3 diphosphate. The catalysed reaction is a tRNA with a 3' CCA end + 2 CTP + ATP = a tRNA with a 3' CCACCA end + 3 diphosphate. Its function is as follows. Catalyzes the addition and repair of the essential 3'-terminal CCA sequence in tRNAs without using a nucleic acid template. Adds these three nucleotides in the order of C, C, and A to the tRNA nucleotide-73, using CTP and ATP as substrates and producing inorganic pyrophosphate. tRNA 3'-terminal CCA addition is required both for tRNA processing and repair. Also involved in tRNA surveillance by mediating tandem CCA addition to generate a CCACCA at the 3' terminus of unstable tRNAs. While stable tRNAs receive only 3'-terminal CCA, unstable tRNAs are marked with CCACCA and rapidly degraded. The polypeptide is Multifunctional CCA protein (Escherichia coli O1:K1 / APEC).